Here is a 274-residue protein sequence, read N- to C-terminus: Serine/threonine-protein kinase 1 (274 aa).

The Protein kinase domain occupies 17 to 265 (ARTALHLVNG…YEVIQKNTYW (249 aa)). Residues 23–31 (LVNGKFGKV) and Lys-46 each bind ATP. Asp-133 (proton acceptor) is an active-site residue.

Belongs to the protein kinase superfamily. Ser/Thr protein kinase family.

The catalysed reaction is L-seryl-[protein] + ATP = O-phospho-L-seryl-[protein] + ADP + H(+). The enzyme catalyses L-threonyl-[protein] + ATP = O-phospho-L-threonyl-[protein] + ADP + H(+). In vitro, can phosphorylate histone H1. The protein is Serine/threonine-protein kinase 1 (PK1) of Lymantria dispar multicapsid nuclear polyhedrosis virus (LdMNPV).